Here is a 193-residue protein sequence, read N- to C-terminus: Adenine phosphoribosyltransferase (193 aa).

The protein belongs to the purine/pyrimidine phosphoribosyltransferase family. As to quaternary structure, homodimer.

The protein resides in the cytoplasm. The catalysed reaction is AMP + diphosphate = 5-phospho-alpha-D-ribose 1-diphosphate + adenine. It participates in purine metabolism; AMP biosynthesis via salvage pathway; AMP from adenine: step 1/1. Functionally, catalyzes a salvage reaction resulting in the formation of AMP, that is energically less costly than de novo synthesis. This is Adenine phosphoribosyltransferase from Bifidobacterium longum (strain DJO10A).